The chain runs to 598 residues: Elongation factor 4 (598 aa).

The tr-type G domain occupies 2-184 (DHIRNFSIIA…AIVKRVPPPR (183 aa)). Residues 14–19 (DHGKST) and 131–134 (NKID) each bind GTP.

Belongs to the TRAFAC class translation factor GTPase superfamily. Classic translation factor GTPase family. LepA subfamily.

It localises to the cell inner membrane. The enzyme catalyses GTP + H2O = GDP + phosphate + H(+). In terms of biological role, required for accurate and efficient protein synthesis under certain stress conditions. May act as a fidelity factor of the translation reaction, by catalyzing a one-codon backward translocation of tRNAs on improperly translocated ribosomes. Back-translocation proceeds from a post-translocation (POST) complex to a pre-translocation (PRE) complex, thus giving elongation factor G a second chance to translocate the tRNAs correctly. Binds to ribosomes in a GTP-dependent manner. This chain is Elongation factor 4, found in Syntrophus aciditrophicus (strain SB).